A 342-amino-acid chain; its full sequence is MATGTLTVDLGALVANYRTLDRLGPGATAAVVKADGYGLGAGLVSTGLAKAGACQFFVATAEEGVGLRQVLGPAPEINVFAGHMAGDTPLIRDAHLTPMLNSPKQVQRHRHVLPGHPYGIQLDTGMHRLGVQPADWPALRDQLHDATLLMSHLACADAPDHPQNAAQLAQFRALTDGIQTPRSLAATGGTLMGPDYHFDLIRPGVGLYGGLPFAGARPVVRLSLPVIQIRCVNPGATIGYGATYTATTPRQIATLSAGYADGLIRALSSKATLWDGDTPCPLVGRVSMDLLTVDVTDCDTPPEALDILGPHQTIDQLAEAAGTIGYEILTSLGPRYRRALTP.

The Proton acceptor; specific for D-alanine role is filled by Lys33. Lys33 carries the N6-(pyridoxal phosphate)lysine modification. Substrate is bound at residue Arg128. The active-site Proton acceptor; specific for L-alanine is Tyr240. Met288 lines the substrate pocket.

It belongs to the alanine racemase family. Requires pyridoxal 5'-phosphate as cofactor.

It carries out the reaction L-alanine = D-alanine. It functions in the pathway amino-acid biosynthesis; D-alanine biosynthesis; D-alanine from L-alanine: step 1/1. Catalyzes the interconversion of L-alanine and D-alanine. May also act on other amino acids. This chain is Alanine racemase (alr), found in Jannaschia sp. (strain CCS1).